Here is a 314-residue protein sequence, read N- to C-terminus: A-kinase anchor protein 7 isoform gamma (314 aa).

The segment at 1 to 46 (MPFAAVDIQDDCGSPDVPQANPKRSKEEEEDRGDKNDHVKKRKKAK) is disordered. The segment covering 24-37 (RSKEEEEDRGDKND) has biased composition (basic and acidic residues). AMP-binding positions include threonine 95 and 185–187 (HLT). Residues threonine 95 and 185–187 (HLT) contribute to the CMP site. A PKA-RII-alpha subunit binding domain region spans residues 260–314 (AELVRLSKRLVENAVLKAVQQYLEETQNKKQPGEGNSTKAEEGDRNGDGSDNNRK). The segment at 261–285 (ELVRLSKRLVENAVLKAVQQYLEET) is RI-alpha-binding. Positions 262-275 (LVRLSKRLVENAVL) are RII-binding. A disordered region spans residues 281 to 314 (YLEETQNKKQPGEGNSTKAEEGDRNGDGSDNNRK). Positions 298–314 (KAEEGDRNGDGSDNNRK) are enriched in basic and acidic residues.

Binds cAMP-dependent protein kinase (PKA). Interacts with PRKCA; only the cytoplasmic form is capable of interacting with PRKCA. Expressed in oocytes.

It is found in the nucleus. The protein resides in the cytoplasm. Its function is as follows. Probably targets cAMP-dependent protein kinase (PKA) to the cellular membrane or cytoskeletal structures. The membrane-associated form reduces epithelial sodium channel (ENaC) activity, whereas the free cytoplasmic form may negatively regulate ENaC channel feedback inhibition by intracellular sodium. The protein is A-kinase anchor protein 7 isoform gamma of Mus musculus (Mouse).